The following is a 288-amino-acid chain: Mortality factor 4-like protein 2 (288 aa).

Positions 1–15 (MSSRKQASQTRGQQS) are enriched in polar residues. Residues 1 to 115 (MSSRKQASQT…DPTVESEEAF (115 aa)) form a disordered region. S71 is modified (phosphoserine). The region spanning 117–288 (SRMEVKVKIP…ASADYHRKAL (172 aa)) is the MRG domain.

As to quaternary structure, component of the NuA4 histone acetyltransferase complex which contains the catalytic subunit KAT5/TIP60 and the subunits EP400, TRRAP/PAF400, BRD8/SMAP, EPC1, DMAP1/DNMAP1, RUVBL1/TIP49, RUVBL2, ING3, actin, ACTL6A/BAF53A, MORF4L1/MRG15, MORF4L2/MRGX, MRGBP, YEATS4/GAS41 and VPS72/YL1. The NuA4 complex interacts with MYC and the adenovirus E1A protein. MORF4L1 may also participate in the formation of NuA4 related complexes which lack the KAT5/TIP60 catalytic subunit, but which include the SWI/SNF related protein SRCAP. Component of the MSIN3A histone deacetylase complex, which includes SIN3A, HDAC2, ARID4B, MORF4L1, RBBP4/RbAp48, and RBBP7/RbAp46. Interacts with MRFAP1 and RB1. May also interact with one or more as yet undefined members of the TLE (transducin-like enhancer of split) family of transcriptional repressors.

It is found in the nucleus. Functionally, component of the NuA4 histone acetyltransferase complex which is involved in transcriptional activation of select genes principally by acetylation of nucleosomal histone H4 and H2A. This modification may both alter nucleosome - DNA interactions and promote interaction of the modified histones with other proteins which positively regulate transcription. This complex may be required for the activation of transcriptional programs associated with oncogene and proto-oncogene mediated growth induction, tumor suppressor mediated growth arrest and replicative senescence, apoptosis, and DNA repair. The NuA4 complex ATPase and helicase activities seem to be, at least in part, contributed by the association of RUVBL1 and RUVBL2 with EP400. NuA4 may also play a direct role in DNA repair when directly recruited to sites of DNA damage. Also a component of the MSIN3A complex which acts to repress transcription by deacetylation of nucleosomal histones. The polypeptide is Mortality factor 4-like protein 2 (Morf4l2) (Mus musculus (Mouse)).